Here is a 432-residue protein sequence, read N- to C-terminus: Glutamate--tRNA ligase 2 (432 aa).

The short motif at 6-16 is the 'HIGH' region element; the sequence is PSPTGDMHIGN. The 'KMSKS' region motif lies at 235–239; the sequence is KMSKR. Lys238 serves as a coordination point for ATP.

It belongs to the class-I aminoacyl-tRNA synthetase family. Glutamate--tRNA ligase type 1 subfamily. As to quaternary structure, monomer.

It is found in the cytoplasm. The enzyme catalyses tRNA(Glu) + L-glutamate + ATP = L-glutamyl-tRNA(Glu) + AMP + diphosphate. Catalyzes the attachment of glutamate to tRNA(Glu) in a two-step reaction: glutamate is first activated by ATP to form Glu-AMP and then transferred to the acceptor end of tRNA(Glu). The sequence is that of Glutamate--tRNA ligase 2 from Sulfurimonas denitrificans (strain ATCC 33889 / DSM 1251) (Thiomicrospira denitrificans (strain ATCC 33889 / DSM 1251)).